A 464-amino-acid chain; its full sequence is tRNA modification GTPase MnmE (464 aa).

Positions 25, 87, and 130 each coordinate (6S)-5-formyl-5,6,7,8-tetrahydrofolate. Residues 226 to 386 (GLSVVLAGQP…LRAELLRIAG (161 aa)) form the TrmE-type G domain. N236 contributes to the K(+) binding site. Residues 236–241 (NVGKSS), 255–261 (TPIAGTT), and 280–283 (DTAG) each bind GTP. S240 provides a ligand contact to Mg(2+). T255, I257, and T260 together coordinate K(+). T261 lines the Mg(2+) pocket. K464 lines the (6S)-5-formyl-5,6,7,8-tetrahydrofolate pocket.

Belongs to the TRAFAC class TrmE-Era-EngA-EngB-Septin-like GTPase superfamily. TrmE GTPase family. In terms of assembly, homodimer. Heterotetramer of two MnmE and two MnmG subunits. It depends on K(+) as a cofactor.

The protein localises to the cytoplasm. Exhibits a very high intrinsic GTPase hydrolysis rate. Involved in the addition of a carboxymethylaminomethyl (cmnm) group at the wobble position (U34) of certain tRNAs, forming tRNA-cmnm(5)s(2)U34. This is tRNA modification GTPase MnmE from Burkholderia orbicola (strain MC0-3).